A 495-amino-acid polypeptide reads, in one-letter code: Cornulin (495 aa).

Residues 49 to 84 (HDPATVDEVLRLLDEDHTGTVEFKEFLVLVFKVAQA) enclose the EF-hand domain. Ca(2+)-binding residues include Asp62, Asp64, Thr66, Thr68, and Glu73. 2 disordered regions span residues 96 to 439 (ACGS…TVVG) and 460 to 481 (LHTS…KRGI). The segment covering 99–110 (SQESGSLHSGAS) has biased composition (polar residues). Residues 137 to 151 (HRQSQQGSRGQNRPG) are compositionally biased toward low complexity. Positions 152–194 (VQTQGQATGSAWVSSYDRQAESQSQERISPQIQLSGQTEQTQK) are enriched in polar residues. A compositionally biased stretch (basic and acidic residues) spans 196 to 222 (GEGKRNQTTEMRPERQPQTREQDRAHQ). Low complexity predominate over residues 226 to 242 (TVTGSGTQTQAGATQTV). Polar residues-rich tracts occupy residues 243 to 282 (EQDS…SQAV) and 290 to 303 (QAGT…QTVE). Over residues 307–324 (SHQTGSTSTQTQESTNGQ) the composition is skewed to low complexity. Positions 334–355 (GRSQTSQAVTGGHTQIQAGSHT) are enriched in polar residues. Low complexity predominate over residues 374–385 (QGQTQTQPGSGQ). 2 stretches are compositionally biased toward polar residues: residues 403 to 420 (QAQT…WSST) and 460 to 473 (LHTS…QDAA).

The protein belongs to the S100-fused protein family. In terms of assembly, homodimer. Expressed in the basal skin layer (at protein level). Squamous epithelia cell-specific. Expressed in the esophagus (periphery of the cells of the granular and the upper spinous layers), foreskin (granular and lower cornified cells), scalp skin (granular layer), inner root sheath of the hair follicle and in primary keratinocytes (at protein level). Expressed in the squamous epithelium of the cervix, esophagus, foreskin and larynx. Expressed in the fetal bladder and scalp skin. Expressed at very low levels in the lung, kidney, uterus, skeletal muscle, heart and fetal brain. Undetectable or barely detectable in esophageal and oral squamous cell carcinoma compared with the matched adjacent normal esophageal mucosa. Undetectable or barely detectable in larynx and esophagus from patients with pH-documented laryngopharyngeal reflux (LPR).

The protein resides in the cytoplasm. Promotes cell proliferation, G1/S cell cycle progression and induces expression of the cell cycle regulator CCND1. Regulates proliferation induced by pro-inflammatory cytokine response via activation of NFKB1 and PI3K/AKT signaling pathways. This chain is Cornulin (CRNN), found in Homo sapiens (Human).